Reading from the N-terminus, the 92-residue chain is YcgL domain-containing protein Sbal_1869 (92 aa).

The 85-residue stretch at 1 to 85 (MLCAVYKSSR…PQVNLLAEHK (85 aa)) folds into the YcgL domain.

This chain is YcgL domain-containing protein Sbal_1869, found in Shewanella baltica (strain OS155 / ATCC BAA-1091).